We begin with the raw amino-acid sequence, 134 residues long: Small ribosomal subunit protein uS8c (134 aa).

As to quaternary structure, component of the chloroplast small ribosomal subunit (SSU). Mature 70S chloroplast ribosomes of higher plants consist of a small (30S) and a large (50S) subunit. The 30S small subunit contains 1 molecule of ribosomal RNA (16S rRNA) and 24 different proteins. The 50S large subunit contains 3 rRNA molecules (23S, 5S and 4.5S rRNA) and 33 different proteins.

Its subcellular location is the plastid. The protein localises to the chloroplast. Functionally, component of the chloroplast ribosome (chloro-ribosome), a dedicated translation machinery responsible for the synthesis of chloroplast genome-encoded proteins, including proteins of the transcription and translation machinery and components of the photosynthetic apparatus. In Spinacia oleracea (Spinach), this protein is Small ribosomal subunit protein uS8c (rps8).